The chain runs to 396 residues: Elongation factor Tu (396 aa).

The 197-residue stretch at 10 to 206 (KPHINVGTIG…QMDAYIPEPQ (197 aa)) folds into the tr-type G domain. A G1 region spans residues 19–26 (GHVDHGKT). 19 to 26 (GHVDHGKT) serves as a coordination point for GTP. Position 26 (T26) interacts with Mg(2+). The tract at residues 60–64 (GITIA) is G2. A G3 region spans residues 81 to 84 (DCPG). GTP contacts are provided by residues 81 to 85 (DCPGH) and 136 to 139 (NKAD). Residues 136 to 139 (NKAD) are G4. Residues 174 to 176 (SAL) form a G5 region.

Belongs to the TRAFAC class translation factor GTPase superfamily. Classic translation factor GTPase family. EF-Tu/EF-1A subfamily. In terms of assembly, monomer.

The protein resides in the cytoplasm. The catalysed reaction is GTP + H2O = GDP + phosphate + H(+). Its function is as follows. GTP hydrolase that promotes the GTP-dependent binding of aminoacyl-tRNA to the A-site of ribosomes during protein biosynthesis. This chain is Elongation factor Tu, found in Nitrosococcus oceani (strain ATCC 19707 / BCRC 17464 / JCM 30415 / NCIMB 11848 / C-107).